We begin with the raw amino-acid sequence, 158 residues long: Ribonuclease H (158 aa).

Positions 3–144 constitute an RNase H type-1 domain; that stretch reads ELKLIHIFTD…CDQLARAAAE (142 aa). 4 residues coordinate Mg(2+): Asp12, Glu50, Asp72, and Asp136.

It belongs to the RNase H family. Monomer. Mg(2+) serves as cofactor.

Its subcellular location is the cytoplasm. It carries out the reaction Endonucleolytic cleavage to 5'-phosphomonoester.. Functionally, endonuclease that specifically degrades the RNA of RNA-DNA hybrids. In Shewanella sp. (strain MR-7), this protein is Ribonuclease H.